Consider the following 130-residue polypeptide: Small ribosomal subunit protein uS9 (130 aa).

Belongs to the universal ribosomal protein uS9 family.

In Geotalea uraniireducens (strain Rf4) (Geobacter uraniireducens), this protein is Small ribosomal subunit protein uS9.